A 264-amino-acid polypeptide reads, in one-letter code: MKQYLDLIKKIIKNGNSKKDRTGTGTLSIFGHHMKFDLKKGFPLITTKKCHIPSIIHELLWFLRGETNIKYLNENKISIWDNWADKFGDLGPIYGKQWRSWDTSNGKKIDQIKNVLKQIKEDPDSRRILVSSWNVGEIDKMSLAPCHILFQFYVLKKKLSCQLYQRSCDVFLGLPFNIASYAILIHMIAQQCNLQVGEFLWTGGDVHLYKNHVELAKKQILRIPKKLPELIILKKPQSLFQYSFEDFKIVGYKPYSLIKGKISV.

R21 contacts dUMP. Position 51 (H51) interacts with (6R)-5,10-methylene-5,6,7,8-tetrahydrofolate. 126 to 127 (RR) is a binding site for dUMP. The active-site Nucleophile is the C146. DUMP contacts are provided by residues 166 to 169 (RSCD), N177, and 207 to 209 (HLY). D169 serves as a coordination point for (6R)-5,10-methylene-5,6,7,8-tetrahydrofolate. Residue S263 participates in (6R)-5,10-methylene-5,6,7,8-tetrahydrofolate binding.

It belongs to the thymidylate synthase family. Bacterial-type ThyA subfamily. In terms of assembly, homodimer.

It localises to the cytoplasm. The enzyme catalyses dUMP + (6R)-5,10-methylene-5,6,7,8-tetrahydrofolate = 7,8-dihydrofolate + dTMP. It functions in the pathway pyrimidine metabolism; dTTP biosynthesis. In terms of biological role, catalyzes the reductive methylation of 2'-deoxyuridine-5'-monophosphate (dUMP) to 2'-deoxythymidine-5'-monophosphate (dTMP) while utilizing 5,10-methylenetetrahydrofolate (mTHF) as the methyl donor and reductant in the reaction, yielding dihydrofolate (DHF) as a by-product. This enzymatic reaction provides an intracellular de novo source of dTMP, an essential precursor for DNA biosynthesis. The chain is Thymidylate synthase from Buchnera aphidicola subsp. Schizaphis graminum (strain Sg).